Consider the following 259-residue polypeptide: 3-methyl-2-oxobutanoate hydroxymethyltransferase (259 aa).

Mg(2+)-binding residues include D44 and D83. 3-methyl-2-oxobutanoate contacts are provided by residues 44–45 (DS), D83, and K113. E115 provides a ligand contact to Mg(2+). The Proton acceptor role is filled by E183.

The protein belongs to the PanB family. In terms of assembly, homodecamer; pentamer of dimers. Requires Mg(2+) as cofactor.

It is found in the cytoplasm. The catalysed reaction is 3-methyl-2-oxobutanoate + (6R)-5,10-methylene-5,6,7,8-tetrahydrofolate + H2O = 2-dehydropantoate + (6S)-5,6,7,8-tetrahydrofolate. Its pathway is cofactor biosynthesis; (R)-pantothenate biosynthesis; (R)-pantoate from 3-methyl-2-oxobutanoate: step 1/2. Its function is as follows. Catalyzes the reversible reaction in which hydroxymethyl group from 5,10-methylenetetrahydrofolate is transferred onto alpha-ketoisovalerate to form ketopantoate. The sequence is that of 3-methyl-2-oxobutanoate hydroxymethyltransferase from Acaryochloris marina (strain MBIC 11017).